Consider the following 209-residue polypeptide: Ribosomal RNA large subunit methyltransferase E (209 aa).

S-adenosyl-L-methionine-binding residues include Gly-63, Trp-65, Asp-83, Asp-99, and Asp-124. The Proton acceptor role is filled by Lys-164.

This sequence belongs to the class I-like SAM-binding methyltransferase superfamily. RNA methyltransferase RlmE family.

It localises to the cytoplasm. The enzyme catalyses uridine(2552) in 23S rRNA + S-adenosyl-L-methionine = 2'-O-methyluridine(2552) in 23S rRNA + S-adenosyl-L-homocysteine + H(+). Functionally, specifically methylates the uridine in position 2552 of 23S rRNA at the 2'-O position of the ribose in the fully assembled 50S ribosomal subunit. The polypeptide is Ribosomal RNA large subunit methyltransferase E (Colwellia psychrerythraea (strain 34H / ATCC BAA-681) (Vibrio psychroerythus)).